The following is an 843-amino-acid chain: Vacuolar membrane protease (843 aa).

The Cytoplasmic segment spans residues 1–16; sequence MTNSRRHIFERICAKA. The chain crosses the membrane as a helical span at residues 17–37; that stretch reads FQSSLTCSIFGFTVLLILYLL. Over 38–347 the chain is Vacuolar; sequence DWKRIAQVPG…LAFGKYWQLN (310 aa). Residues Asn-96, Asn-109, and Asn-117 are each glycosylated (N-linked (GlcNAc...) asparagine). Positions 147 and 159 each coordinate Zn(2+). Glu-191 acts as the Proton acceptor in catalysis. Glu-192 is a Zn(2+) binding site. Asn-209 carries an N-linked (GlcNAc...) asparagine glycan. Glu-217 lines the Zn(2+) pocket. Asn-275 is a glycosylation site (N-linked (GlcNAc...) asparagine). Zn(2+) is bound at residue His-292. Residue Asn-322 is glycosylated (N-linked (GlcNAc...) asparagine). A helical membrane pass occupies residues 348–368; that stretch reads LPIYQVLNIIFAVICPIVLLL. Residues 369 to 386 are Cytoplasmic-facing; sequence TLIRFPSLYEQLKKPRYT. A helical membrane pass occupies residues 387-407; that stretch reads VCFVVSCIFVSIFDTLTVLLL. Residues 408 to 417 are Vacuolar-facing; it reads TWINPYVINS. A helical membrane pass occupies residues 418-438; it reads HTGLILALFYLTNLIALAFSF. Residues 439 to 456 are Cytoplasmic-facing; the sequence is RAAATHSKLSSEDLSSIE. Residues 457–477 form a helical membrane-spanning segment; it reads IVFIWYAQILWYLVFIVSVIL. The Vacuolar portion of the chain corresponds to 478-484; the sequence is SIYFQLG. Residues 485 to 505 traverse the membrane as a helical segment; that stretch reads STYWVTLSYLCTFTCCIMTII. The Cytoplasmic segment spans residues 506–566; sequence RINYFVDNVV…NRAHVKLIDN (61 aa). The helical transmembrane segment at 567 to 587 threads the bilayer; the sequence is IWTVIYFIFNVPFPVFLCYDI. Topologically, residues 588–608 are vacuolar; the sequence is LVETILPAGSQTLTDSVFSSK. The helical transmembrane segment at 609–629 threads the bilayer; sequence LYKLVIFVVFLSLVNSGPFIF. Topologically, residues 630 to 636 are cytoplasmic; that stretch reads RALSKKS. A helical transmembrane segment spans residues 637-657; it reads LAVLTMLWITLFVQALSVNPF. The Vacuolar segment spans residues 658 to 843; the sequence is TESAPLKLSF…LLKVKSSIVI (186 aa). Asn-677, Asn-703, Asn-707, Asn-754, and Asn-788 each carry an N-linked (GlcNAc...) asparagine glycan.

It belongs to the peptidase M28 family. The cofactor is Zn(2+).

The protein resides in the membrane. It is found in the vacuole membrane. Its function is as follows. May be involved in vacuolar sorting and osmoregulation. The protein is Vacuolar membrane protease of Schizosaccharomyces pombe (strain 972 / ATCC 24843) (Fission yeast).